The chain runs to 313 residues: Cyclin-dependent kinase B2-1 (313 aa).

Methionine 1 is subject to N-acetylmethionine. In terms of domain architecture, Protein kinase spans 14-304 (FEKLEKVGEG…AKMAMEHPYF (291 aa)). ATP-binding positions include 20-28 (VGEGTYGKV) and lysine 43. Tyrosine 25 is modified (phosphotyrosine). Aspartate 145 serves as the catalytic Proton acceptor. Threonine 179 carries the phosphothreonine modification.

Belongs to the protein kinase superfamily. CMGC Ser/Thr protein kinase family. CDC2/CDKX subfamily. As to quaternary structure, interacts with CYCD4-1 and CKS1. Expressed in root tips, shoot apical meristem, leaf primordia vascular tissues and tapetum of anthers.

It carries out the reaction L-seryl-[protein] + ATP = O-phospho-L-seryl-[protein] + ADP + H(+). The enzyme catalyses L-threonyl-[protein] + ATP = O-phospho-L-threonyl-[protein] + ADP + H(+). The catalysed reaction is [DNA-directed RNA polymerase] + ATP = phospho-[DNA-directed RNA polymerase] + ADP + H(+). The chain is Cyclin-dependent kinase B2-1 (CDKB2-1) from Arabidopsis thaliana (Mouse-ear cress).